We begin with the raw amino-acid sequence, 501 residues long: Glycosyltransferase family 92 protein F13G3.3 (501 aa).

The helical transmembrane segment at 10 to 30 (LSVVLLFSFLFFVTAVLLQFI) threads the bilayer. Positions 151 to 439 (KPVVMCISPL…ISDCYKQSYY (289 aa)) constitute a GT92 domain.

This sequence belongs to the glycosyltransferase 92 family.

The protein resides in the membrane. The sequence is that of Glycosyltransferase family 92 protein F13G3.3 from Caenorhabditis elegans.